Consider the following 156-residue polypeptide: Endoribonuclease YbeY (156 aa).

His-117, His-121, and His-127 together coordinate Zn(2+).

It belongs to the endoribonuclease YbeY family. Zn(2+) serves as cofactor.

It localises to the cytoplasm. Single strand-specific metallo-endoribonuclease involved in late-stage 70S ribosome quality control and in maturation of the 3' terminus of the 16S rRNA. In Shewanella piezotolerans (strain WP3 / JCM 13877), this protein is Endoribonuclease YbeY.